The following is an 859-amino-acid chain: DNA mismatch repair protein MutS (859 aa).

615-622 contributes to the ATP binding site; that stretch reads GPNMGGKS.

Belongs to the DNA mismatch repair MutS family.

In terms of biological role, this protein is involved in the repair of mismatches in DNA. It is possible that it carries out the mismatch recognition step. This protein has a weak ATPase activity. The polypeptide is DNA mismatch repair protein MutS (Chromohalobacter salexigens (strain ATCC BAA-138 / DSM 3043 / CIP 106854 / NCIMB 13768 / 1H11)).